The sequence spans 429 residues: Ribosomal RNA small subunit methyltransferase B (429 aa).

S-adenosyl-L-methionine contacts are provided by residues 254 to 260, Asp-277, Asp-303, and Asp-322; that span reads CAAPGGK. Cys-375 functions as the Nucleophile in the catalytic mechanism. The tract at residues 397-419 is disordered; it reads ALSETGTPDQPGQQNLPGGEEGD. The segment covering 400 to 412 has biased composition (polar residues); that stretch reads ETGTPDQPGQQNL.

This sequence belongs to the class I-like SAM-binding methyltransferase superfamily. RsmB/NOP family.

The protein resides in the cytoplasm. The enzyme catalyses cytidine(967) in 16S rRNA + S-adenosyl-L-methionine = 5-methylcytidine(967) in 16S rRNA + S-adenosyl-L-homocysteine + H(+). Its function is as follows. Specifically methylates the cytosine at position 967 (m5C967) of 16S rRNA. The sequence is that of Ribosomal RNA small subunit methyltransferase B from Salmonella typhi.